Consider the following 888-residue polypeptide: Bifunctional uridylyltransferase/uridylyl-removing enzyme (888 aa).

The uridylyltransferase stretch occupies residues 1–338; that stretch reads MIITSPLLDY…LPNYERKIEE (338 aa). The segment at 182–204 is disordered; it reads EQAKRHAQHNNTESNLEPDIKNA. Residues 339–699 form a uridylyl-removing region; sequence INENFKLVDG…AHRQSAQDAV (361 aa). Residues 457 to 579 enclose the HD domain; that stretch reads VDAHTLLLIR…LGDMEHLDYL (123 aa). 2 consecutive ACT domains span residues 700–781 and 809–887; these read QIFI…GLMQ and MVEI…IVSQ.

This sequence belongs to the GlnD family. Requires Mg(2+) as cofactor.

The enzyme catalyses [protein-PII]-L-tyrosine + UTP = [protein-PII]-uridylyl-L-tyrosine + diphosphate. The catalysed reaction is [protein-PII]-uridylyl-L-tyrosine + H2O = [protein-PII]-L-tyrosine + UMP + H(+). With respect to regulation, uridylyltransferase (UTase) activity is inhibited by glutamine, while glutamine activates uridylyl-removing (UR) activity. Its function is as follows. Modifies, by uridylylation and deuridylylation, the PII regulatory proteins (GlnB and homologs), in response to the nitrogen status of the cell that GlnD senses through the glutamine level. Under low glutamine levels, catalyzes the conversion of the PII proteins and UTP to PII-UMP and PPi, while under higher glutamine levels, GlnD hydrolyzes PII-UMP to PII and UMP (deuridylylation). Thus, controls uridylylation state and activity of the PII proteins, and plays an important role in the regulation of nitrogen assimilation and metabolism. The polypeptide is Bifunctional uridylyltransferase/uridylyl-removing enzyme (Acinetobacter baylyi (strain ATCC 33305 / BD413 / ADP1)).